The primary structure comprises 273 residues: N-alpha-acetyltransferase 30 (273 aa).

2 disordered regions span residues 1–39 (MADA…HQLN) and 62–85 (QKTR…PNGL). Positions 125 to 273 (RYVRYESELQ…DALRLKLWLR (149 aa)) constitute an N-acetyltransferase domain.

This sequence belongs to the acetyltransferase family. MAK3 subfamily. As to quaternary structure, component of the N-terminal acetyltransferase C (NatC) complex.

Its subcellular location is the cytoplasm. The protein localises to the nucleus. It carries out the reaction N-terminal L-methionyl-L-leucyl-[protein] + acetyl-CoA = N-terminal N(alpha)-acetyl-L-methionyl-L-leucyl-[protein] + CoA + H(+). It catalyses the reaction N-terminal L-methionyl-L-isoleucyl-[protein] + acetyl-CoA = N-terminal N(alpha)-acetyl-L-methionyl-L-isoleucyl-[protein] + CoA + H(+). The enzyme catalyses N-terminal L-methionyl-L-phenylalanyl-[protein] + acetyl-CoA = N-terminal N(alpha)-acetyl-L-methionyl-L-phenylalanyl-[protein] + CoA + H(+). The catalysed reaction is N-terminal L-methionyl-L-tryptophyl-[protein] + acetyl-CoA = N-terminal N(alpha)-acetyl-L-methionyl-L-tryptophyl-[protein] + CoA + H(+). It carries out the reaction N-terminal L-methionyl-L-tyrosyl-[protein] + acetyl-CoA = N-terminal N(alpha)-acetyl-L-methionyl-L-tyrosyl-[protein] + CoA + H(+). Catalytic subunit of the N-terminal acetyltransferase C (NatC) complex. Catalyzes acetylation of the N-terminal methionine residues of peptides beginning with Met-Leu-Ala and Met-Leu-Gly. N-terminal acetylation protects proteins from ubiquitination and degradation by the N-end rule pathway. The polypeptide is N-alpha-acetyltransferase 30 (naa30) (Xenopus laevis (African clawed frog)).